The primary structure comprises 559 residues: MNLKSDIEIAQNTKELPIKEIAQKIDLRPEEIELYGNDKAKISWKGINCIKKNQKLGKLILVTSISPTPAGEGKSTITIGLGDAIRNQLHKNTLIALREPSMGPVFGLKGGATGGGYAQIIPMEDINLHFTGDMHALTSAIDTLAALVDNYIYQDNSLELDPNRILLKRGIDVNDRTLRKITIGQGSRFNGIEHEASFAITVANELMAILCLATDINDLKKRIGNILVGFSVKDEPVYVKDLGFEGAIAALLSTALKPNLVQTLEHTPAIVHGGPFANIAHGANSVIATNTALHLSDYVLTEAGFGADLGGQKFMDFVSNHLDKRPDAVVVVATVRALKYQAEESTDHLDEENIPALEKGFANLKRHMENMAHYGVPVIVLINKFASDTDQELNKLKELVQDDGFECEIVSYHDEGSKGGIQAAEKVVELTGKASDFKPVYKPEDSVEDKIAKIAHKIYHAKDIEYSDTAKKQLAEIKKMGKDELPVIIAKTQYSFTDKKKILGAPEDFILHVKDLALKNGAGFIVVATGSILDMPGLPKHPAALDIDVDNNGKISGLF.

68–75 serves as a coordination point for ATP; that stretch reads TPAGEGKS.

It belongs to the formate--tetrahydrofolate ligase family.

The enzyme catalyses (6S)-5,6,7,8-tetrahydrofolate + formate + ATP = (6R)-10-formyltetrahydrofolate + ADP + phosphate. The protein operates within one-carbon metabolism; tetrahydrofolate interconversion. The polypeptide is Formate--tetrahydrofolate ligase (Lactobacillus gasseri (strain ATCC 33323 / DSM 20243 / BCRC 14619 / CIP 102991 / JCM 1131 / KCTC 3163 / NCIMB 11718 / NCTC 13722 / AM63)).